Here is a 364-residue protein sequence, read N- to C-terminus: GTPase Obg (364 aa).

An Obg domain is found at 1 to 159 (MKFVDEAYID…KSLKLELKVL (159 aa)). The OBG-type G domain occupies 160-334 (ADVGLLGMPN…LVKTIYQHVK (175 aa)). GTP is bound by residues 166-173 (GMPNAGKS), 191-195 (FTTLH), 213-216 (DLPG), 284-287 (NKLD), and 315-317 (SAL). Residues S173 and T193 each coordinate Mg(2+). Residues 337–364 (QKSEQPEEEVDPRFIELPPEPAKPASSD) form a disordered region.

It belongs to the TRAFAC class OBG-HflX-like GTPase superfamily. OBG GTPase family. Monomer. It depends on Mg(2+) as a cofactor.

It is found in the cytoplasm. An essential GTPase which binds GTP, GDP and possibly (p)ppGpp with moderate affinity, with high nucleotide exchange rates and a fairly low GTP hydrolysis rate. Plays a role in control of the cell cycle, stress response, ribosome biogenesis and in those bacteria that undergo differentiation, in morphogenesis control. The protein is GTPase Obg of Polaromonas naphthalenivorans (strain CJ2).